A 669-amino-acid polypeptide reads, in one-letter code: DNA ligase (669 aa).

NAD(+) is bound by residues Asp-34 to Asp-38, Ser-83 to Leu-84, and Glu-114. Lys-116 (N6-AMP-lysine intermediate) is an active-site residue. NAD(+)-binding residues include Arg-137, Glu-171, Lys-287, and Lys-311. Zn(2+)-binding residues include Cys-405, Cys-408, Cys-423, and Cys-428. A BRCT domain is found at Asn-591–Lys-669.

This sequence belongs to the NAD-dependent DNA ligase family. LigA subfamily. It depends on Mg(2+) as a cofactor. Requires Mn(2+) as cofactor.

It carries out the reaction NAD(+) + (deoxyribonucleotide)n-3'-hydroxyl + 5'-phospho-(deoxyribonucleotide)m = (deoxyribonucleotide)n+m + AMP + beta-nicotinamide D-nucleotide.. DNA ligase that catalyzes the formation of phosphodiester linkages between 5'-phosphoryl and 3'-hydroxyl groups in double-stranded DNA using NAD as a coenzyme and as the energy source for the reaction. It is essential for DNA replication and repair of damaged DNA. The sequence is that of DNA ligase from Bacillus cereus (strain AH187).